The primary structure comprises 384 residues: FAD-dependent urate hydroxylase (384 aa).

FAD-binding positions include G11, 30–31 (EA), S43, and V125. Substrate contacts are provided by residues N178, R204, and 216–218 (YFF). FAD contacts are provided by residues D285 and 295-299 (GQGGC).

The protein belongs to the FAD-dependent urate hydroxylase family. FAD serves as cofactor.

It catalyses the reaction urate + NADH + O2 + H(+) = 5-hydroxyisourate + NAD(+) + H2O. It participates in purine metabolism; urate degradation. Catalyzes the hydroxylation of uric acid to 5-hydroxyisourate. The chain is FAD-dependent urate hydroxylase (hpxO) from Klebsiella pneumoniae.